Consider the following 250-residue polypeptide: MAVPTVTMQSLLDVGAHFGHQTHRWNPKMKPYIFGDRNGIHIMDLSQTVPLFTRALDFISQTVAHGGKVLFVGTKRQAQEPIADAARRSGQFFVNHRWLGGMLTNWRTISGSIKRLKSLEEKLSGDTAGFTKKEILQLTRERDKLELSLGGIRDMGTIPDIMFVVDANKEELAIKEANTLGIPVVAILDSNVSPDGIAFPIPANDDAARAVRYYCDAIAEAATRGDQQNRQELGEDLGAAVEPAAEEALA.

The interval 226 to 250 (DQQNRQELGEDLGAAVEPAAEEALA) is disordered. Low complexity predominate over residues 239–250 (AAVEPAAEEALA).

It belongs to the universal ribosomal protein uS2 family.

The polypeptide is Small ribosomal subunit protein uS2 (rpsB) (Zymomonas mobilis subsp. mobilis (strain ATCC 31821 / ZM4 / CP4)).